The sequence spans 66 residues: Large ribosomal subunit protein bL33c (66 aa).

The protein belongs to the bacterial ribosomal protein bL33 family.

The protein resides in the plastid. It localises to the chloroplast. This is Large ribosomal subunit protein bL33c from Lotus japonicus (Lotus corniculatus var. japonicus).